A 213-amino-acid polypeptide reads, in one-letter code: Thymidylate kinase (213 aa).

Gly7 to Thr14 serves as a coordination point for ATP.

The protein belongs to the thymidylate kinase family.

It catalyses the reaction dTMP + ATP = dTDP + ADP. In terms of biological role, phosphorylation of dTMP to form dTDP in both de novo and salvage pathways of dTTP synthesis. This chain is Thymidylate kinase, found in Mycoplasma capricolum subsp. capricolum (strain California kid / ATCC 27343 / NCTC 10154).